A 306-amino-acid polypeptide reads, in one-letter code: Ribonuclease Z (306 aa).

Zn(2+)-binding residues include His-63, His-65, Asp-67, His-68, His-141, Asp-211, and His-269. Catalysis depends on Asp-67, which acts as the Proton acceptor.

Belongs to the RNase Z family. Homodimer. Requires Zn(2+) as cofactor.

The enzyme catalyses Endonucleolytic cleavage of RNA, removing extra 3' nucleotides from tRNA precursor, generating 3' termini of tRNAs. A 3'-hydroxy group is left at the tRNA terminus and a 5'-phosphoryl group is left at the trailer molecule.. Its function is as follows. Zinc phosphodiesterase, which displays some tRNA 3'-processing endonuclease activity. Probably involved in tRNA maturation, by removing a 3'-trailer from precursor tRNA. The chain is Ribonuclease Z from Staphylococcus aureus (strain bovine RF122 / ET3-1).